A 33-amino-acid polypeptide reads, in one-letter code: Mu-theraphotoxin-Os1a (33 aa).

3 disulfide bridges follow: cysteine 2–cysteine 17, cysteine 9–cysteine 22, and cysteine 16–cysteine 29. The residue at position 33 (leucine 33) is a Leucine amide.

Belongs to the neurotoxin 10 (Hwtx-1) family. 14 (Hntx-1) subfamily. In terms of assembly, monomer. As to expression, expressed by the venom gland.

The protein resides in the secreted. Potently and reversibly inhibits some human voltage-gated sodium channels (Nav1.1/SCN1A (IC(50)=72.0 nM), Nav1.2/SCN2A (IC(50)=75.5 nM), Nav1.6/SCN8A (IC(50)=115.0 nM), Nav1.7/SCN9A (IC(50)=52.7-129.5 nM), Nav1.3/SCN3A (IC(50)=306.6 nM)). The hNav1.7/SCN9A channel inhibition occurs without any change in steady-state inactivation- and conductance-voltage relationships. On adult mouse DRG neurons, this toxin is approximately 1000-fold more efficient to inhibit tetrodotoxin (TTX)-sensitive than TTX-resistant sodium currents. In vivo, this toxin exhibits analgesic effects in mice pain models. In Omothymus schioedtei (Malaysian earth tiger tarantula), this protein is Mu-theraphotoxin-Os1a.